Consider the following 130-residue polypeptide: Small ribosomal subunit protein uS9 (130 aa).

A disordered region spans residues 98-130; it reads LKKAGMLTRDPRMKERKKYGLKKARKASQFSKR. The segment covering 111–130 has biased composition (basic residues); it reads KERKKYGLKKARKASQFSKR.

It belongs to the universal ribosomal protein uS9 family.

This Lacticaseibacillus casei (strain BL23) (Lactobacillus casei) protein is Small ribosomal subunit protein uS9.